The primary structure comprises 599 residues: MNDKQKAKINKAYNKLLKKINKRYPDVSVVYARDHKNKVHALYQDPESGNIFSLEKRKQLASNYPLFELTSDNPISFTNNIVSLNAYDDKNNLVTVQYDQDNNTFYDQNGNVLDVSSYTDEKKVPLINYLSSTQTSQEQPTQQDYPSIDAGLPKIEVDDQPKAAQHTTLETESEPDVFELNDSLNQPQQPTENLGDDQFVEKEVPPTQQLHQDLVHQQPVQVDSGSQNHSFNNSPSLKPPLVNKPAKLVQPEVKHIPQVEVQPKPQIVEPKIEPKPEVKHVSHVEIQPKPEVKPVVDSVPEVKQPEVKHVPHVEVQPKPVVDLKPQRIEPRIESKPEVIKHIPQVEVQPKAQMVEPRIEPKPETKYIPQVESTPQVEVHHWKPEVKTEYQPQQPLPTSGLQIKVVPRSAALLQSKLDTGFQPRQVERTTDSDITVSVSSHASLLEKINALNHQRIMSDIALKSDNTIKSSNFSRFYPENEYVATKYSDPLYSDTNQSLTSDRFSLDFDYTPKSRVNNYTPLRSTNFQNNAISNYRFSRTPSSYYPLTRRPWRLTNISSYRSSFHSPTRLSSFRRTSLPFSSSYDGLRRYPSRSYWSKDF.

A compositionally biased stretch (polar residues) spans 220 to 236; that stretch reads VQVDSGSQNHSFNNSPS. Residues 220–241 are disordered; it reads VQVDSGSQNHSFNNSPSLKPPL.

It is found in the cell projection. It localises to the attachment organelle membrane. Functionally, component of the cytoskeleton-like structure which stabilizes the shape of the wall-less mycoplasma. This cytoskeleton-like network of accessory proteins containing HMW proteins 1 to 5 allows the proper anchoring of cytadhesin proteins in the mycoplasmal membrane at the attachment organelle. Essential for successful surface parasitism. The sequence is that of Cytadherence high molecular weight protein 3 (hmw3) from Mycoplasma genitalium (strain ATCC 33530 / DSM 19775 / NCTC 10195 / G37) (Mycoplasmoides genitalium).